The sequence spans 668 residues: DNA ligase (668 aa).

Residues 34-38 (DTEYD), 83-84 (SL), and Glu-114 contribute to the NAD(+) site. Lys-116 functions as the N6-AMP-lysine intermediate in the catalytic mechanism. Residues Arg-137, Glu-171, Lys-286, and Lys-310 each contribute to the NAD(+) site. Zn(2+) contacts are provided by Cys-404, Cys-407, Cys-422, and Cys-427. One can recognise a BRCT domain in the interval 588–668 (NSDSIIANKT…FFDLLKSEKG (81 aa)).

The protein belongs to the NAD-dependent DNA ligase family. LigA subfamily. Mg(2+) is required as a cofactor. Mn(2+) serves as cofactor.

The catalysed reaction is NAD(+) + (deoxyribonucleotide)n-3'-hydroxyl + 5'-phospho-(deoxyribonucleotide)m = (deoxyribonucleotide)n+m + AMP + beta-nicotinamide D-nucleotide.. Functionally, DNA ligase that catalyzes the formation of phosphodiester linkages between 5'-phosphoryl and 3'-hydroxyl groups in double-stranded DNA using NAD as a coenzyme and as the energy source for the reaction. It is essential for DNA replication and repair of damaged DNA. This Mycoplasma capricolum subsp. capricolum (strain California kid / ATCC 27343 / NCTC 10154) protein is DNA ligase.